The sequence spans 157 residues: Ribonuclease H (157 aa).

One can recognise an RNase H type-1 domain in the interval 4 to 146 (KRTEITIYTD…CDKLAVKASQ (143 aa)). Mg(2+)-binding residues include D13, E51, D73, and D138.

This sequence belongs to the RNase H family. Monomer. It depends on Mg(2+) as a cofactor.

The protein localises to the cytoplasm. The enzyme catalyses Endonucleolytic cleavage to 5'-phosphomonoester.. Its function is as follows. Endonuclease that specifically degrades the RNA of RNA-DNA hybrids. This chain is Ribonuclease H, found in Trichodesmium erythraeum (strain IMS101).